A 125-amino-acid polypeptide reads, in one-letter code: Large ribosomal subunit protein bL20 (125 aa).

This sequence belongs to the bacterial ribosomal protein bL20 family.

Functionally, binds directly to 23S ribosomal RNA and is necessary for the in vitro assembly process of the 50S ribosomal subunit. It is not involved in the protein synthesizing functions of that subunit. The protein is Large ribosomal subunit protein bL20 of Zymomonas mobilis subsp. mobilis (strain ATCC 31821 / ZM4 / CP4).